The chain runs to 396 residues: 1-deoxy-D-xylulose 5-phosphate reductoisomerase (396 aa).

Positions 10, 11, 12, 13, 38, and 123 each coordinate NADPH. Residue K124 coordinates 1-deoxy-D-xylulose 5-phosphate. E125 provides a ligand contact to NADPH. D149 contacts Mn(2+). Residues S150, E151, S185, and H208 each coordinate 1-deoxy-D-xylulose 5-phosphate. A Mn(2+)-binding site is contributed by E151. Residue G214 participates in NADPH binding. 1-deoxy-D-xylulose 5-phosphate-binding residues include S221, N226, K227, and E230. E230 contacts Mn(2+).

It belongs to the DXR family. Mg(2+) is required as a cofactor. Requires Mn(2+) as cofactor.

The enzyme catalyses 2-C-methyl-D-erythritol 4-phosphate + NADP(+) = 1-deoxy-D-xylulose 5-phosphate + NADPH + H(+). It functions in the pathway isoprenoid biosynthesis; isopentenyl diphosphate biosynthesis via DXP pathway; isopentenyl diphosphate from 1-deoxy-D-xylulose 5-phosphate: step 1/6. Its function is as follows. Catalyzes the NADPH-dependent rearrangement and reduction of 1-deoxy-D-xylulose-5-phosphate (DXP) to 2-C-methyl-D-erythritol 4-phosphate (MEP). This is 1-deoxy-D-xylulose 5-phosphate reductoisomerase from Shewanella pealeana (strain ATCC 700345 / ANG-SQ1).